The following is a 371-amino-acid chain: RNA-binding protein 48 (371 aa).

In terms of domain architecture, RRM spans 46–124 (QYLLIQGVPA…GLLHVCYAPE (79 aa)). Disordered stretches follow at residues 157-191 (KPVPEQKGTKDSRQGFHPPMPGFGTAALNTSPESP) and 348-371 (VPKPPEDNIKDVCTSHPGKQRRRI). The span at 158–170 (PVPEQKGTKDSRQ) shows a compositional bias: basic and acidic residues.

Belongs to the RBM48 family. In terms of assembly, component of the minor spliceosome. Within this complex, interacts with ARMC7 and PRPF8/PRP8.

In terms of biological role, as a component of the minor spliceosome, involved in the splicing of U12-type introns in pre-mRNAs. The chain is RNA-binding protein 48 (Rbm48) from Mus musculus (Mouse).